The primary structure comprises 387 residues: MEPPQVPAEAPQPRASEDSPRPERTGWEEPDAQPQELPEKSPSPALSGSPRVPPLSLGYGAFRRLGSCSRELPSPSPSWAEQPRDGEAELEPWTASGEPAPASWAPVELQVDVRVKPVGAAGASRAPSPAPSTRFLTVPVPESPAFARRSAPTLQWLPRAPSPGSTWSRGSPLAANATESVSPAEGCMVPPGSPACRCRCREPGLTKEDDALLQRAGIDGKKLPRAITLIGLPQYMKSLRWALVVMAVLLAVCTVAVVALASRGGTKCQPCPQGWMWSQEQCYYLSEEAQDWEGSQAFCSAHHATLPLLSHTQDFLRKYRITKGSWVGARRGPEGWHWTDGVPLPYQLFPADSEDHPDFSCGGLEEGRLVALDCSSPRPWVCARETK.

Residues 1-105 are disordered; it reads MEPPQVPAEA…SGEPAPASWA (105 aa). A compositionally biased stretch (basic and acidic residues) spans 15 to 27; the sequence is ASEDSPRPERTGW. S143 is modified (phosphoserine). The segment at 155-174 is disordered; the sequence is QWLPRAPSPGSTWSRGSPLA. Residues 241 to 261 traverse the membrane as a helical segment; it reads WALVVMAVLLAVCTVAVVALA. The 106-residue stretch at 278-383 folds into the C-type lectin domain; the sequence is SQEQCYYLSE…CSSPRPWVCA (106 aa). Cystine bridges form between C299-C382 and C361-C374.

Its subcellular location is the membrane. The sequence is that of Killer cell lectin-like receptor subfamily G member 2 (Klrg2) from Mus musculus (Mouse).